The following is a 192-amino-acid chain: MLLAEEFAESALHRRVLFHAAAGRAGAEGGPSLPRLPCSGLDSAPSPRGPLPGHAPRRPPRPRTGRQVLGAPPLSEKCELPGQDSQKSSVPSHGPKTPSGQKVKAPHRPLSLSWKQDREQTLAAAYVPVVVDPRGQNPEKLRFNFYTSQYSNSLNPFYTLQKPTCGYLYRRDTDHTRKRFDVPPANLVLWRS.

The interval 24-108 (RAGAEGGPSL…SGQKVKAPHR (85 aa)) is disordered. Residues 55-64 (APRRPPRPRT) show a composition bias toward basic residues.

It belongs to the CIMIP3-like family. As to expression, detected in the sperm flagellum (at protein level).

The protein localises to the cytoplasm. The protein resides in the cytoskeleton. Its subcellular location is the flagellum axoneme. The chain is Ciliary microtubule inner protein 3 from Bos taurus (Bovine).